The primary structure comprises 313 residues: Homoserine O-succinyltransferase (313 aa).

The Acyl-thioester intermediate role is filled by Cys-142. Residues Lys-163 and Ser-192 each coordinate substrate. Catalysis depends on His-235, which acts as the Proton acceptor. Residue Glu-237 is part of the active site. Arg-249 contributes to the substrate binding site.

Belongs to the MetA family.

Its subcellular location is the cytoplasm. The enzyme catalyses L-homoserine + succinyl-CoA = O-succinyl-L-homoserine + CoA. It functions in the pathway amino-acid biosynthesis; L-methionine biosynthesis via de novo pathway; O-succinyl-L-homoserine from L-homoserine: step 1/1. Transfers a succinyl group from succinyl-CoA to L-homoserine, forming succinyl-L-homoserine. This is Homoserine O-succinyltransferase from Shewanella sp. (strain ANA-3).